The sequence spans 207 residues: Large ribosomal subunit protein uL4 (207 aa).

The tract at residues 49-78 (HAVKNRSAVSGGGRKPWRQKGTGRARQGSI) is disordered.

The protein belongs to the universal ribosomal protein uL4 family. As to quaternary structure, part of the 50S ribosomal subunit.

Its function is as follows. One of the primary rRNA binding proteins, this protein initially binds near the 5'-end of the 23S rRNA. It is important during the early stages of 50S assembly. It makes multiple contacts with different domains of the 23S rRNA in the assembled 50S subunit and ribosome. Functionally, forms part of the polypeptide exit tunnel. This Streptococcus thermophilus (strain CNRZ 1066) protein is Large ribosomal subunit protein uL4.